A 185-amino-acid polypeptide reads, in one-letter code: Large ribosomal subunit protein uL22 (185 aa).

Belongs to the universal ribosomal protein uL22 family. Component of the large ribosomal subunit. Mature ribosomes consist of a small (40S) and a large (60S) subunit. The 40S subunit contains about 32 different proteins and 1 molecule of RNA (18S). The 60S subunit contains 45 different proteins and 3 molecules of RNA (25S, 5.8S and 5S).

It localises to the cytoplasm. In terms of biological role, component of the ribosome, a large ribonucleoprotein complex responsible for the synthesis of proteins in the cell. The small ribosomal subunit (SSU) binds messenger RNAs (mRNAs) and translates the encoded message by selecting cognate aminoacyl-transfer RNA (tRNA) molecules. The large subunit (LSU) contains the ribosomal catalytic site termed the peptidyl transferase center (PTC), which catalyzes the formation of peptide bonds, thereby polymerizing the amino acids delivered by tRNAs into a polypeptide chain. The nascent polypeptides leave the ribosome through a tunnel in the LSU and interact with protein factors that function in enzymatic processing, targeting, and the membrane insertion of nascent chains at the exit of the ribosomal tunnel. In Candida albicans (strain SC5314 / ATCC MYA-2876) (Yeast), this protein is Large ribosomal subunit protein uL22.